Consider the following 374-residue polypeptide: Ribosomal RNA large subunit methyltransferase G (374 aa).

It belongs to the methyltransferase superfamily. RlmG family.

It localises to the cytoplasm. It catalyses the reaction guanosine(1835) in 23S rRNA + S-adenosyl-L-methionine = N(2)-methylguanosine(1835) in 23S rRNA + S-adenosyl-L-homocysteine + H(+). In terms of biological role, specifically methylates the guanine in position 1835 (m2G1835) of 23S rRNA. The protein is Ribosomal RNA large subunit methyltransferase G of Pseudomonas aeruginosa (strain UCBPP-PA14).